The primary structure comprises 209 residues: Small ribosomal subunit protein uS4 (209 aa).

The S4 RNA-binding domain maps to 99 to 162; sequence RRLDNVVYRL…RESNKFQEMK (64 aa).

The protein belongs to the universal ribosomal protein uS4 family. In terms of assembly, part of the 30S ribosomal subunit. Contacts protein S5. The interaction surface between S4 and S5 is involved in control of translational fidelity.

Functionally, one of the primary rRNA binding proteins, it binds directly to 16S rRNA where it nucleates assembly of the body of the 30S subunit. Its function is as follows. With S5 and S12 plays an important role in translational accuracy. This chain is Small ribosomal subunit protein uS4, found in Syntrophomonas wolfei subsp. wolfei (strain DSM 2245B / Goettingen).